We begin with the raw amino-acid sequence, 350 residues long: Histidinol-phosphate aminotransferase (350 aa).

Residue lysine 207 is modified to N6-(pyridoxal phosphate)lysine.

This sequence belongs to the class-II pyridoxal-phosphate-dependent aminotransferase family. Histidinol-phosphate aminotransferase subfamily. Homodimer. Pyridoxal 5'-phosphate serves as cofactor.

The enzyme catalyses L-histidinol phosphate + 2-oxoglutarate = 3-(imidazol-4-yl)-2-oxopropyl phosphate + L-glutamate. It functions in the pathway amino-acid biosynthesis; L-histidine biosynthesis; L-histidine from 5-phospho-alpha-D-ribose 1-diphosphate: step 7/9. This Streptococcus thermophilus (strain ATCC BAA-491 / LMD-9) protein is Histidinol-phosphate aminotransferase.